The primary structure comprises 94 residues: Pyrimidine/purine nucleoside phosphorylase (94 aa).

This sequence belongs to the nucleoside phosphorylase PpnP family.

The catalysed reaction is a purine D-ribonucleoside + phosphate = a purine nucleobase + alpha-D-ribose 1-phosphate. The enzyme catalyses adenosine + phosphate = alpha-D-ribose 1-phosphate + adenine. It carries out the reaction cytidine + phosphate = cytosine + alpha-D-ribose 1-phosphate. It catalyses the reaction guanosine + phosphate = alpha-D-ribose 1-phosphate + guanine. The catalysed reaction is inosine + phosphate = alpha-D-ribose 1-phosphate + hypoxanthine. The enzyme catalyses thymidine + phosphate = 2-deoxy-alpha-D-ribose 1-phosphate + thymine. It carries out the reaction uridine + phosphate = alpha-D-ribose 1-phosphate + uracil. It catalyses the reaction xanthosine + phosphate = alpha-D-ribose 1-phosphate + xanthine. Its function is as follows. Catalyzes the phosphorolysis of diverse nucleosides, yielding D-ribose 1-phosphate and the respective free bases. Can use uridine, adenosine, guanosine, cytidine, thymidine, inosine and xanthosine as substrates. Also catalyzes the reverse reactions. The chain is Pyrimidine/purine nucleoside phosphorylase from Salmonella paratyphi C (strain RKS4594).